The following is a 288-amino-acid chain: MNLRDKLDVYMRLARMDRPIGTLLLLWPCLMALTFAAGGLPDLKVFIIFVIGVFSMRACGCIINDYADRKLDAHVERTKGRPLASGEVSSKEALLLFVVMALFSFGLVLMLNPLVVQLSVIGIILTIIYPFTKRYTNMPQMFLGTVWSWSIPMAYAAQTGTVPVEAWWLFAANWCWTVAYDTMYAMVDRDDDLKVGIKSTAILFGRYDRQIIGLFQLAALSCFIIAGMVADRGAIYAVGILAFIGFGLYQQKLINGRERAPCFTAFLNNNWAGMVLFTALMLDYLVLG.

Transmembrane regions (helical) follow at residues 20 to 40 (IGTL…AGGL), 43 to 63 (LKVF…GCII), 96 to 116 (LFVV…PLVV), 210 to 230 (QIIG…GMVA), 234 to 254 (AIYA…QKLI), and 262 to 282 (CFTA…ALML).

It belongs to the UbiA prenyltransferase family. Requires Mg(2+) as cofactor.

The protein resides in the cell inner membrane. It carries out the reaction all-trans-octaprenyl diphosphate + 4-hydroxybenzoate = 4-hydroxy-3-(all-trans-octaprenyl)benzoate + diphosphate. It participates in cofactor biosynthesis; ubiquinone biosynthesis. Functionally, catalyzes the prenylation of para-hydroxybenzoate (PHB) with an all-trans polyprenyl group. Mediates the second step in the final reaction sequence of ubiquinone-8 (UQ-8) biosynthesis, which is the condensation of the polyisoprenoid side chain with PHB, generating the first membrane-bound Q intermediate 3-octaprenyl-4-hydroxybenzoate. In Shewanella pealeana (strain ATCC 700345 / ANG-SQ1), this protein is 4-hydroxybenzoate octaprenyltransferase.